A 241-amino-acid chain; its full sequence is Pyridoxine 5'-phosphate synthase (241 aa).

Asparagine 7 lines the 3-amino-2-oxopropyl phosphate pocket. Residue 9 to 10 (DH) participates in 1-deoxy-D-xylulose 5-phosphate binding. A 3-amino-2-oxopropyl phosphate-binding site is contributed by arginine 18. Histidine 43 (proton acceptor) is an active-site residue. 1-deoxy-D-xylulose 5-phosphate-binding residues include arginine 45 and histidine 50. Residue glutamate 70 is the Proton acceptor of the active site. Threonine 100 serves as a coordination point for 1-deoxy-D-xylulose 5-phosphate. Histidine 191 (proton donor) is an active-site residue. 3-amino-2-oxopropyl phosphate-binding positions include glycine 192 and 213–214 (GH).

The protein belongs to the PNP synthase family. In terms of assembly, homooctamer; tetramer of dimers.

The protein localises to the cytoplasm. It catalyses the reaction 3-amino-2-oxopropyl phosphate + 1-deoxy-D-xylulose 5-phosphate = pyridoxine 5'-phosphate + phosphate + 2 H2O + H(+). It participates in cofactor biosynthesis; pyridoxine 5'-phosphate biosynthesis; pyridoxine 5'-phosphate from D-erythrose 4-phosphate: step 5/5. Its function is as follows. Catalyzes the complicated ring closure reaction between the two acyclic compounds 1-deoxy-D-xylulose-5-phosphate (DXP) and 3-amino-2-oxopropyl phosphate (1-amino-acetone-3-phosphate or AAP) to form pyridoxine 5'-phosphate (PNP) and inorganic phosphate. The polypeptide is Pyridoxine 5'-phosphate synthase (Maridesulfovibrio salexigens (strain ATCC 14822 / DSM 2638 / NCIMB 8403 / VKM B-1763) (Desulfovibrio salexigens)).